The sequence spans 357 residues: COP9 signalosome complex subunit 5a (357 aa).

The residue at position 1 (M1) is an N-acetylmethionine. Residues 59 to 196 form the MPN domain; sequence VHISALALLK…IGAFRTYPEG (138 aa). Residues H142, H144, and D155 each coordinate Zn(2+). Positions 142–155 match the JAMM motif motif; the sequence is HSHPGYGCWLSGID. Residues 338–357 are disordered; the sequence is ARQSKKSADDSSDPEPMITS.

Belongs to the peptidase M67A family. CSN5 subfamily. Component of the CSN complex, probably composed of CSN1, CSN2, CSN3, CSN4, CSN5 (CSN5A or CSN5B), CSN6 (CSN6A or CSN6B), CSN7 and CSN8. CSN5A or CSN5B are present within distinct CSN complexes each containing only one copy of CSN5. Interacts with itself. In the complex, it is located in the center and probably interacts directly with CSN4 and CSN6A or CSN6B. Present also in subcomplex forms which inculdes CSN3. Also exists as monomeric form. Interacts with CYT1 in vitro, but not in planta. A divalent metal cation is required as a cofactor. Ubiquitously expressed. Highly expressed in flowers and roots. Expressed at lower level in seedlings and siliques.

The protein resides in the cytoplasm. The protein localises to the nucleus. In terms of biological role, probable protease subunit of the COP9 signalosome complex (CSN), a complex involved in various cellular and developmental processes such as photomorphogenesis and auxin and jasmonate responses. The CSN complex is an essential regulator of the ubiquitin (Ubl) conjugation pathway by mediating the deneddylation of the cullin subunits of the SCF-type E3 ligase complexes, leading to decrease the Ubl ligase activity of SCF. In the complex, it probably acts as the catalytic center that mediates the cleavage of Nedd8 from cullins. It however has no metalloprotease activity by itself and requires the other subunits of the CSN complex. The CSN complex is involved in repression of photomorphogenesis in darkness by regulating the activity of COP1-containing Ubl ligase complexes. The complex is also required for degradation of PSIAA6 by regulating the activity of the Ubl ligase SCF-TIR complex. Involved in CSN's deneddylation/derubylation activity. Required for the deneddylation of all cullins. Essential for the structural integrity of the CSN holocomplex. This is COP9 signalosome complex subunit 5a from Arabidopsis thaliana (Mouse-ear cress).